The following is a 180-amino-acid chain: Large ribosomal subunit protein uL6 (180 aa).

It belongs to the universal ribosomal protein uL6 family. In terms of assembly, part of the 50S ribosomal subunit.

Its function is as follows. This protein binds to the 23S rRNA, and is important in its secondary structure. It is located near the subunit interface in the base of the L7/L12 stalk, and near the tRNA binding site of the peptidyltransferase center. The chain is Large ribosomal subunit protein uL6 from Anaeromyxobacter dehalogenans (strain 2CP-1 / ATCC BAA-258).